The sequence spans 846 residues: Protein kintoun (846 aa).

Disordered stretches follow at residues 1 to 21 (MSTA…ERAD), 377 to 412 (DSGV…PPDP), 581 to 657 (HTSI…DSTI), and 743 to 846 (HDSS…DDEI). The residue at position 378 (Ser378) is a Phosphoserine. Low complexity predominate over residues 399–408 (PETPELETAA). Composition is skewed to basic residues over residues 596–612 (LHKK…KKQR) and 750–766 (QRKK…RAQQ). Position 770 is a phosphoserine (Ser770). Residues 821-832 (TRQDHADADAKN) show a composition bias toward basic and acidic residues.

This sequence belongs to the PIH1 family. Kintoun subfamily. Interacts with Pp1alpha-96A, Pp1-87B, Pp1-13C and flw.

It localises to the cytoplasm. Functionally, required for cytoplasmic pre-assembly of axonemal dyneins, thereby playing a central role in motility in cilia and flagella. Involved in pre-assembly of dynein arm complexes in the cytoplasm before intraflagellar transport loads them for the ciliary compartment. The chain is Protein kintoun from Drosophila pseudoobscura pseudoobscura (Fruit fly).